We begin with the raw amino-acid sequence, 541 residues long: CTP synthase (541 aa).

The tract at residues 1-268 (MAKFIFITGG…AEIVCRRLGL (268 aa)) is amidoligase domain. Serine 13 is a CTP binding site. Residue serine 13 participates in UTP binding. Residues 14–19 (GLGKGI) and aspartate 71 each bind ATP. The Mg(2+) site is built by aspartate 71 and glutamate 141. Residues 148–150 (DIE), 189–194 (KTKPTQ), and lysine 225 each bind CTP. UTP contacts are provided by residues 189–194 (KTKPTQ) and lysine 225. The Glutamine amidotransferase type-1 domain maps to 293 to 539 (EIALVGKYVA…IKAALEYRAG (247 aa)). Glycine 359 contacts L-glutamine. Cysteine 386 serves as the catalytic Nucleophile; for glutamine hydrolysis. Residues 387–390 (MGMQ), glutamate 410, and arginine 467 each bind L-glutamine. Active-site residues include histidine 512 and glutamate 514.

It belongs to the CTP synthase family. Homotetramer.

The enzyme catalyses UTP + L-glutamine + ATP + H2O = CTP + L-glutamate + ADP + phosphate + 2 H(+). It catalyses the reaction L-glutamine + H2O = L-glutamate + NH4(+). It carries out the reaction UTP + NH4(+) + ATP = CTP + ADP + phosphate + 2 H(+). Its pathway is pyrimidine metabolism; CTP biosynthesis via de novo pathway; CTP from UDP: step 2/2. Allosterically activated by GTP, when glutamine is the substrate; GTP has no effect on the reaction when ammonia is the substrate. The allosteric effector GTP functions by stabilizing the protein conformation that binds the tetrahedral intermediate(s) formed during glutamine hydrolysis. Inhibited by the product CTP, via allosteric rather than competitive inhibition. Catalyzes the ATP-dependent amination of UTP to CTP with either L-glutamine or ammonia as the source of nitrogen. Regulates intracellular CTP levels through interactions with the four ribonucleotide triphosphates. In Symbiobacterium thermophilum (strain DSM 24528 / JCM 14929 / IAM 14863 / T), this protein is CTP synthase.